A 525-amino-acid polypeptide reads, in one-letter code: GMP synthase [glutamine-hydrolyzing] (525 aa).

Positions 9-207 (RILILDFGSQ…VMDICKCEKL (199 aa)) constitute a Glutamine amidotransferase type-1 domain. The active-site Nucleophile is the Cys-86. Residues His-181 and Glu-183 contribute to the active site. The GMPS ATP-PPase domain maps to 208-400 (WTAGAIIEDA…LGLPYDMLYR (193 aa)). An ATP-binding site is contributed by 235–241 (SGGVDSS).

Homodimer.

It carries out the reaction XMP + L-glutamine + ATP + H2O = GMP + L-glutamate + AMP + diphosphate + 2 H(+). It functions in the pathway purine metabolism; GMP biosynthesis; GMP from XMP (L-Gln route): step 1/1. In terms of biological role, catalyzes the synthesis of GMP from XMP. The polypeptide is GMP synthase [glutamine-hydrolyzing] (Alteromonas mediterranea (strain DSM 17117 / CIP 110805 / LMG 28347 / Deep ecotype)).